The sequence spans 577 residues: Aspartate--tRNA(Asp/Asn) ligase (577 aa).

Glutamate 171 provides a ligand contact to L-aspartate. The tract at residues 195-198 (QLFK) is aspartate. Arginine 217 contacts L-aspartate. Residues 217–219 (RDE) and glutamine 226 each bind ATP. Histidine 444 contacts L-aspartate. Glutamate 474 contacts ATP. An L-aspartate-binding site is contributed by arginine 481. 526 to 529 (GFDR) contributes to the ATP binding site.

It belongs to the class-II aminoacyl-tRNA synthetase family. Type 1 subfamily. Homodimer.

It is found in the cytoplasm. It carries out the reaction tRNA(Asx) + L-aspartate + ATP = L-aspartyl-tRNA(Asx) + AMP + diphosphate. Its function is as follows. Aspartyl-tRNA synthetase with relaxed tRNA specificity since it is able to aspartylate not only its cognate tRNA(Asp) but also tRNA(Asn). Reaction proceeds in two steps: L-aspartate is first activated by ATP to form Asp-AMP and then transferred to the acceptor end of tRNA(Asp/Asn). The chain is Aspartate--tRNA(Asp/Asn) ligase from Helicobacter pylori (strain Shi470).